The primary structure comprises 664 residues: Intraflagellar transport protein 70B (664 aa).

TPR repeat units follow at residues 11-44 (DGEFTAVVYRLIRDARYAEAVQLLGGELQRSPRS), 45-78 (RAGLSLLGYCYYRLQEFALAAECYEQLGQLHPEL), 153-186 (LDGQVNLGCLLYKEGHYEAACSKFSAALQASGYR), 188-220 (DLSYNLALAYYSSRHYALALKHIADIIEHGIRQ), 385-418 (LTEQLRKLTIQVQEARHNKDDEAVKKAVNEYEDT), 423-456 (IPVLMAQAKIYWNLENYPMVEKLFRKSVEFCNDH), and 458-491 (VWKLNVAHVLFMQENKYKEAIGFYEPIVKKHYDN). Residues 509 to 532 (MISQNEEAEELMRKIGKEEEQLSY) are a coiled coil. Residues 543–576 (CIVNLVIGTLYCAKGNYDFGISRVIKSLEPCNKK) form a TPR 8 repeat.

Belongs to the TTC30/dfy-1/fleer family. In terms of assembly, interacts with the IFT B complex components IFT27, IFT46, IFT74, IFT52, IFT57, IFT80, IFT81 and IFT88. Interacts with KIF17.

It localises to the cell projection. Its subcellular location is the cilium. Its function is as follows. Required for polyglutamylation of axonemal tubulin. Plays a role in anterograde intraflagellar transport (IFT), the process by which cilia precursors are transported from the base of the cilium to the site of their incorporation at the tip. In Bos taurus (Bovine), this protein is Intraflagellar transport protein 70B (IFT70B).